Consider the following 124-residue polypeptide: Large ribosomal subunit protein bL12 (124 aa).

It belongs to the bacterial ribosomal protein bL12 family. Homodimer. Part of the ribosomal stalk of the 50S ribosomal subunit. Forms a multimeric L10(L12)X complex, where L10 forms an elongated spine to which 2 to 4 L12 dimers bind in a sequential fashion. Binds GTP-bound translation factors.

Forms part of the ribosomal stalk which helps the ribosome interact with GTP-bound translation factors. Is thus essential for accurate translation. The protein is Large ribosomal subunit protein bL12 of Dehalococcoides mccartyi (strain ATCC BAA-2266 / KCTC 15142 / 195) (Dehalococcoides ethenogenes (strain 195)).